Consider the following 130-residue polypeptide: uncharacterized protein (130 aa).

Positions 1-23 (MINRKVVYALSALLLFVYSYAFI) are cleaved as a signal peptide.

This is an uncharacterized protein from Aquifex aeolicus (strain VF5).